Consider the following 185-residue polypeptide: Ribosome-recycling factor (185 aa).

This sequence belongs to the RRF family.

Its subcellular location is the cytoplasm. Responsible for the release of ribosomes from messenger RNA at the termination of protein biosynthesis. May increase the efficiency of translation by recycling ribosomes from one round of translation to another. The chain is Ribosome-recycling factor from Alkaliphilus oremlandii (strain OhILAs) (Clostridium oremlandii (strain OhILAs)).